The following is a 198-amino-acid chain: Ribonuclease HII (198 aa).

The 191-residue stretch at 5-195 (LRVAGVDEAG…VKAWLASHQG (191 aa)) folds into the RNase H type-2 domain. A divalent metal cation-binding residues include Asp11, Glu12, and Asp103.

Belongs to the RNase HII family. Mn(2+) serves as cofactor. The cofactor is Mg(2+).

The protein resides in the cytoplasm. It catalyses the reaction Endonucleolytic cleavage to 5'-phosphomonoester.. Endonuclease that specifically degrades the RNA of RNA-DNA hybrids. The polypeptide is Ribonuclease HII (Chromobacterium violaceum (strain ATCC 12472 / DSM 30191 / JCM 1249 / CCUG 213 / NBRC 12614 / NCIMB 9131 / NCTC 9757 / MK)).